Reading from the N-terminus, the 598-residue chain is Arylsulfate sulfotransferase AssT (598 aa).

The signal sequence occupies residues 1–27; sequence MFDKYRKTLVAGTVAITLGLSASGVMA. 4-methylumbelliferone-binding residues include H279 and H383. A disulfide bridge connects residues C445 and C451. Position 463 (H463) interacts with 4-methylumbelliferone. The Nucleophile; sulfurylated histidine covalent intermediate role is filled by H463.

This sequence belongs to the aryl sulfotransferase family. As to quaternary structure, homodimer. The disulfide bond is crucial for enzyme activity.

It is found in the periplasm. It catalyses the reaction an aryl sulfate + a phenol = an aryl sulfate + a phenol. It carries out the reaction 4-methylumbelliferone sulfate + phenol = phenyl sulfate + 4-methylumbelliferone. Its function is as follows. Catalyzes the transfer of a sulfate group from a phenyl sulfate ester to other phenolic compounds. In vitro, is able to use 4-methylumbelliferyl sulfate and p-nitrophenyl sulfate (PNS) as donor substrates with phenol as the acceptor substrate. Cannot use 3'-phosphoadenosine-5'-phophosulfate (PAPS), the donor substrate of mammalian sulfotransferase. The polypeptide is Arylsulfate sulfotransferase AssT (Escherichia coli O6:H1 (strain CFT073 / ATCC 700928 / UPEC)).